The primary structure comprises 132 residues: Small ribosomal subunit protein uS8 (132 aa).

Belongs to the universal ribosomal protein uS8 family. As to quaternary structure, part of the 30S ribosomal subunit. Contacts proteins S5 and S12.

Its function is as follows. One of the primary rRNA binding proteins, it binds directly to 16S rRNA central domain where it helps coordinate assembly of the platform of the 30S subunit. This is Small ribosomal subunit protein uS8 from Lysinibacillus sphaericus (strain C3-41).